The chain runs to 194 residues: Probable GTP-binding protein EngB (194 aa).

The EngB-type G domain occupies 22–194 (GKPEIALVGR…SVWEWITAHM (173 aa)). Residues 30–37 (GRSNVGKS), 57–61 (GKTQT), 75–78 (DVPG), 142–145 (TKSD), and 175–177 (FSS) contribute to the GTP site. Mg(2+)-binding residues include Ser37 and Thr59.

This sequence belongs to the TRAFAC class TrmE-Era-EngA-EngB-Septin-like GTPase superfamily. EngB GTPase family. It depends on Mg(2+) as a cofactor.

Functionally, necessary for normal cell division and for the maintenance of normal septation. The sequence is that of Probable GTP-binding protein EngB from Leuconostoc citreum (strain KM20).